The primary structure comprises 1254 residues: DNA-directed RNA polymerase subunit beta' (1254 aa).

Zn(2+)-binding residues include C59, C61, C76, and C79. Mg(2+)-binding residues include D501, D503, and D505. Residues C871, C946, C953, and C956 each coordinate Zn(2+).

The protein belongs to the RNA polymerase beta' chain family. In terms of assembly, the RNAP catalytic core consists of 2 alpha, 1 beta, 1 beta' and 1 omega subunit. When a sigma factor is associated with the core the holoenzyme is formed, which can initiate transcription. Mg(2+) serves as cofactor. Requires Zn(2+) as cofactor.

It catalyses the reaction RNA(n) + a ribonucleoside 5'-triphosphate = RNA(n+1) + diphosphate. Its function is as follows. DNA-dependent RNA polymerase catalyzes the transcription of DNA into RNA using the four ribonucleoside triphosphates as substrates. The chain is DNA-directed RNA polymerase subunit beta' from Mesoplasma florum (strain ATCC 33453 / NBRC 100688 / NCTC 11704 / L1) (Acholeplasma florum).